The chain runs to 306 residues: Uracil phosphoribosyltransferase homolog (306 aa).

Disordered regions lie at residues 1-28 (MATE…NPEP) and 58-87 (SSVP…NYDA). Polar residues-rich tracts occupy residues 13–28 (CHNQ…NPEP) and 70–79 (GGATFNSENN). GTP contacts are provided by residues arginine 130, arginine 139, and 173 to 176 (EKGN). Arginine 183 contributes to the 5-phospho-alpha-D-ribose 1-diphosphate binding site. Residues arginine 200 and arginine 229 each coordinate GTP. A 5-phospho-alpha-D-ribose 1-diphosphate-binding site is contributed by 235–243 (YPILSTGNT). 296–298 (THF) is a binding site for uracil.

This sequence belongs to the UPRTase family.

Its subcellular location is the cytoplasm. The protein localises to the nucleus. The protein is Uracil phosphoribosyltransferase homolog (UPRT) of Bos taurus (Bovine).